The sequence spans 291 residues: Phosphatidylglycerol--prolipoprotein diacylglyceryl transferase (291 aa).

7 helical membrane passes run 21-41, 60-80, 96-116, 124-144, 198-218, 225-245, and 258-278; these read IALH…MWLA, LLYA…VLFY, WDGG…MWWF, FLQV…MGRI, SQLY…NLYI, GSVS…VEFF, and ISMG…MMIW. R143 serves as a coordination point for a 1,2-diacyl-sn-glycero-3-phospho-(1'-sn-glycerol).

This sequence belongs to the Lgt family.

The protein resides in the cell inner membrane. The enzyme catalyses L-cysteinyl-[prolipoprotein] + a 1,2-diacyl-sn-glycero-3-phospho-(1'-sn-glycerol) = an S-1,2-diacyl-sn-glyceryl-L-cysteinyl-[prolipoprotein] + sn-glycerol 1-phosphate + H(+). The protein operates within protein modification; lipoprotein biosynthesis (diacylglyceryl transfer). Catalyzes the transfer of the diacylglyceryl group from phosphatidylglycerol to the sulfhydryl group of the N-terminal cysteine of a prolipoprotein, the first step in the formation of mature lipoproteins. This Photorhabdus laumondii subsp. laumondii (strain DSM 15139 / CIP 105565 / TT01) (Photorhabdus luminescens subsp. laumondii) protein is Phosphatidylglycerol--prolipoprotein diacylglyceryl transferase.